The chain runs to 239 residues: Carboxy-S-adenosyl-L-methionine synthase (239 aa).

Residues Tyr35, 64 to 66, 88 to 89, and Arg195 each bind S-adenosyl-L-methionine; these read GCS and DN.

This sequence belongs to the class I-like SAM-binding methyltransferase superfamily. Cx-SAM synthase family. Homodimer.

It catalyses the reaction prephenate + S-adenosyl-L-methionine = carboxy-S-adenosyl-L-methionine + 3-phenylpyruvate + H2O. Catalyzes the conversion of S-adenosyl-L-methionine (SAM) to carboxy-S-adenosyl-L-methionine (Cx-SAM). The protein is Carboxy-S-adenosyl-L-methionine synthase of Helicobacter pylori (strain HPAG1).